We begin with the raw amino-acid sequence, 60 residues long: Large ribosomal subunit protein eL37 (60 aa).

Zn(2+) is bound by residues C19, C22, C34, and C37. The C4-type zinc finger occupies 19–37 (CRRCGRISFHAQKKVCSSC).

It belongs to the eukaryotic ribosomal protein eL37 family. Zn(2+) serves as cofactor.

Functionally, binds to the 23S rRNA. The sequence is that of Large ribosomal subunit protein eL37 from Methanoregula boonei (strain DSM 21154 / JCM 14090 / 6A8).